Reading from the N-terminus, the 329-residue chain is MVQGLPGEFEDYLYRVIASLYRYAERLVVVDYPSSPTRRSIDLIVSLPGSRVVLIKAIYDASLISKKEVEELSAVANSLGVSAVIIAERMGREDLLTGVVYDRYGVNMVNLETFENFVSGREEVYVTRYKDIYTVSISSEKLREKRLEKGLSLGHLAYMLKTSRKSIYEYERGVMSPSVEKAEKLVDILGEEILEPIDILTSPRKPVSKRDFDKPEEALVGEKLLELGFKVSHAKRTVVDLVAGRSGEEGVGSRIMIVVKRSREGRERMMSRIMKGVKMGSILSSSLYAVVNREEKSLIKDIDYTKTIVKDVREFINDVSRGRVEENEE.

The HTH cro/C1-type domain maps to 142 to 200 (LREKRLEKGLSLGHLAYMLKTSRKSIYEYERGVMSPSVEKAEKLVDILGEEILEPIDIL). Residues 153–172 (LGHLAYMLKTSRKSIYEYER) constitute a DNA-binding region (H-T-H motif).

This chain is Putative HTH-type transcriptional regulatory protein APE_0778, found in Aeropyrum pernix (strain ATCC 700893 / DSM 11879 / JCM 9820 / NBRC 100138 / K1).